The sequence spans 326 residues: Flap endonuclease 1 (326 aa).

Positions 1-100 (MGNADLRSLA…DEVEKRREQR (100 aa)) are N-domain. Positions 28, 82, 154, 156, 175, 177, and 225 each coordinate Mg(2+). Residues 118–246 (RVAKLDSRTQ…TAVKDLHEHG (129 aa)) form an I-domain region. The interval 318–326 (VQTGLDRWA) is interaction with PCNA.

The protein belongs to the XPG/RAD2 endonuclease family. FEN1 subfamily. Interacts with PCNA. PCNA stimulates the nuclease activity without altering cleavage specificity. It depends on Mg(2+) as a cofactor.

Its function is as follows. Structure-specific nuclease with 5'-flap endonuclease and 5'-3' exonuclease activities involved in DNA replication and repair. During DNA replication, cleaves the 5'-overhanging flap structure that is generated by displacement synthesis when DNA polymerase encounters the 5'-end of a downstream Okazaki fragment. Binds the unpaired 3'-DNA end and kinks the DNA to facilitate 5' cleavage specificity. Cleaves one nucleotide into the double-stranded DNA from the junction in flap DNA, leaving a nick for ligation. Also involved in the base excision repair (BER) pathway. Acts as a genome stabilization factor that prevents flaps from equilibrating into structures that lead to duplications and deletions. Also possesses 5'-3' exonuclease activity on nicked or gapped double-stranded DNA. This chain is Flap endonuclease 1, found in Haloarcula marismortui (strain ATCC 43049 / DSM 3752 / JCM 8966 / VKM B-1809) (Halobacterium marismortui).